Here is a 497-residue protein sequence, read N- to C-terminus: Ankyrin repeat domain-containing protein 53 (497 aa).

Basic residues predominate over residues 1-10 (MRRPSRRRSK). Residues 1 to 65 (MRRPSRRRSK…VSSPNSESSQ (65 aa)) form a disordered region. Over residues 12 to 27 (STPPRSHTTPRRTGPS) the composition is skewed to low complexity. Basic and acidic residues predominate over residues 28-39 (DSRRRPGTKEQP). ANK repeat units follow at residues 110–140 (KGFT…PVDL), 144–177 (KGQT…AINS), and 181–210 (NGST…NVHA). A coiled-coil region spans residues 239–264 (WKHDKKVLAQEMEKLRTLKEKLTILE).

In terms of assembly, interacts with PSRC1; recruited by PSRC1 to the spindle during mitosis. Phosphorylated during mitosis.

It is found in the cytoplasm. It localises to the cytoskeleton. The protein resides in the spindle. Its subcellular location is the spindle pole. In terms of biological role, required for normal progression through mitosis. Involved in chromosome alignment and cytokinesis via regulation of microtubules polymerization. The protein is Ankyrin repeat domain-containing protein 53 (Ankrd53) of Mus musculus (Mouse).